The primary structure comprises 225 residues: 7-cyano-7-deazaguanine synthase (225 aa).

Residue 10–20 (LSGGIDSATAA) participates in ATP binding. Zn(2+)-binding residues include Cys191, Cys199, Cys202, and Cys205.

The protein belongs to the QueC family. Zn(2+) is required as a cofactor.

The enzyme catalyses 7-carboxy-7-deazaguanine + NH4(+) + ATP = 7-cyano-7-deazaguanine + ADP + phosphate + H2O + H(+). The protein operates within purine metabolism; 7-cyano-7-deazaguanine biosynthesis. In terms of biological role, catalyzes the ATP-dependent conversion of 7-carboxy-7-deazaguanine (CDG) to 7-cyano-7-deazaguanine (preQ(0)). This Prochlorococcus marinus (strain NATL1A) protein is 7-cyano-7-deazaguanine synthase.